A 255-amino-acid polypeptide reads, in one-letter code: 3-oxoacyl-[acyl-carrier-protein] reductase MabA (255 aa).

Residues 33-35 (RGI), Arg-55, 69-70 (DV), Gly-98, Tyr-161, Lys-165, Ile-194, and Arg-205 each bind NADP(+). Tyr-161 acts as the Proton acceptor in catalysis.

Belongs to the short-chain dehydrogenases/reductases (SDR) family. As to quaternary structure, homotetramer.

Its subcellular location is the secreted. It is found in the cell wall. The enzyme catalyses a (3R)-hydroxyacyl-[ACP] + NADP(+) = a 3-oxoacyl-[ACP] + NADPH + H(+). The protein operates within lipid metabolism; mycolic acid biosynthesis. Functionally, part of the mycobacterial fatty acid elongation system FAS-II, which is involved in mycolic acid biosynthesis. Catalyzes the NADPH-dependent reduction of beta-ketoacyl derivatives, the second step of the FAS-II elongation cycle. This Mycobacterium avium protein is 3-oxoacyl-[acyl-carrier-protein] reductase MabA.